The primary structure comprises 97 residues: Coiled-coil domain-containing protein 167 (97 aa).

Positions 2-78 (TKKKRENLGV…LLRHENRKNT (77 aa)) form a coiled coil. The helical transmembrane segment at 78–95 (TLLSVAIFTVFALLYAYW) threads the bilayer.

It is found in the membrane. The polypeptide is Coiled-coil domain-containing protein 167 (Ccdc167) (Mus musculus (Mouse)).